The sequence spans 153 residues: SsrA-binding protein (153 aa).

Positions 129–153 (KREDMKKKDQSREMAQALREKSKSH) are disordered.

This sequence belongs to the SmpB family.

It localises to the cytoplasm. Functionally, required for rescue of stalled ribosomes mediated by trans-translation. Binds to transfer-messenger RNA (tmRNA), required for stable association of tmRNA with ribosomes. tmRNA and SmpB together mimic tRNA shape, replacing the anticodon stem-loop with SmpB. tmRNA is encoded by the ssrA gene; the 2 termini fold to resemble tRNA(Ala) and it encodes a 'tag peptide', a short internal open reading frame. During trans-translation Ala-aminoacylated tmRNA acts like a tRNA, entering the A-site of stalled ribosomes, displacing the stalled mRNA. The ribosome then switches to translate the ORF on the tmRNA; the nascent peptide is terminated with the 'tag peptide' encoded by the tmRNA and targeted for degradation. The ribosome is freed to recommence translation, which seems to be the essential function of trans-translation. This is SsrA-binding protein from Geobacter sulfurreducens (strain ATCC 51573 / DSM 12127 / PCA).